Here is a 768-residue protein sequence, read N- to C-terminus: P-selectin (768 aa).

Positions Met1–Ala41 are cleaved as a signal peptide. Over Trp42 to Ala709 the chain is Extracellular. Positions Val58 to Cys158 constitute a C-type lectin domain. Disulfide bonds link Cys60/Cys158, Cys131/Cys150, Cys163/Cys174, Cys168/Cys183, Cys185/Cys194, Cys200/Cys244, Cys230/Cys257, Cys262/Cys306, Cys292/Cys319, Cys324/Cys368, Cys354/Cys381, Cys386/Cys430, Cys416/Cys443, Cys448/Cys492, Cys478/Cys505, Cys510/Cys554, Cys540/Cys567, Cys580/Cys624, Cys610/Cys637, Cys642/Cys686, and Cys672/Cys699. Glu121, Asn123, and Asn124 together coordinate Ca(2+). Asn123 lines the a carbohydrate pocket. Glu133 and Asn146 together coordinate a carbohydrate. Ca(2+) is bound by residues Asn146 and Asp147. In terms of domain architecture, EGF-like spans Tyr159–Glu195. Sushi domains follow at residues Lys198–Ala259, Val260–Ala321, Ile322–Ala383, Leu384–Ala445, Val446–Ala507, Ile508–Gly569, Val578–Ala639, and Val640–Ala701. Residue Asn398 is glycosylated (N-linked (GlcNAc...) asparagine). N-linked (GlcNAc...) asparagine glycosylation is present at Asn603. Asn654, Asn661, and Asn679 each carry an N-linked (GlcNAc...) asparagine glycan. A helical transmembrane segment spans residues Leu710 to Leu733. The Cytoplasmic portion of the chain corresponds to Arg734–Pro768. Cys745 carries the S-palmitoyl cysteine; alternate lipid modification. Cys745 is lipidated: S-stearoyl cysteine; alternate. Positions Tyr756–Phe759 match the Endocytosis signal motif. The interaction with SNX17 stretch occupies residues Phe759 to Pro768.

Belongs to the selectin/LECAM family. Interacts with SNX17. Interacts with SELPLG/PSGL1 and PODXL2 and mediates neutrophil adhesion and leukocyte rolling. This interaction requires the sialyl-Lewis X epitope of SELPLG and PODXL2, and specific tyrosine sulfation on SELPLG. Interacts (via C-type lectin domain) with alpha-IIb/beta3 integrin ITGA2B:ITGB3 and alpha-V/beta-3 integrin ITGAV:ITGB3. Interacts with alpha5/beta1 integrin ITGA5:ITGB1 and alpha4/beta1 integrin ITGA4:ITGB. As to expression, stored in the alpha-granules of platelets and Weibel-Palade bodies of endothelial cells. Upon cell activation by agonists, P-selectin is transported rapidly to the cell surface.

It is found in the cell membrane. Its function is as follows. Ca(2+)-dependent receptor for myeloid cells that binds to carbohydrates on neutrophils and monocytes. Mediates the interaction of activated endothelial cells or platelets with leukocytes. The ligand recognized is sialyl-Lewis X. Mediates rapid rolling of leukocyte rolling over vascular surfaces during the initial steps in inflammation through interaction with SELPLG. Mediates cell-cell interactions and cell adhesion via the interaction with integrin alpha-IIb/beta3 (ITGA2B:ITGB3) and integrin alpha-V/beta-3 (ITGAV:ITGB3). This Mus musculus (Mouse) protein is P-selectin (Selp).